Consider the following 1296-residue polypeptide: Clustered mitochondria protein homolog (1296 aa).

The segment at 1 to 31 is disordered; the sequence is MTLMNGDGAHEHQAEAEPKQNGHEMGDQTEE. Residues 8–26 are compositionally biased toward basic and acidic residues; that stretch reads GAHEHQAEAEPKQNGHEMG. The Clu domain maps to 333–575; it reads RAEDAYTSRL…RTFPPDLNFL (243 aa). Residues 662–689 are a coiled coil; the sequence is LDGEAQLKQLEETMAAHKETVDTRSKEV. TPR repeat units lie at residues 970-1003, 1012-1045, 1096-1129, and 1138-1171; these read AFHF…FNNV, CACL…SERI, ALLD…NSKY, and ALSH…YKNQ. Residues 1242–1274 are a coiled coil; sequence QKDLEHLKAEVQRRQQLQEAIKGAENHEAKTKE. The tract at residues 1261-1296 is disordered; the sequence is AIKGAENHEAKTKEPEMSETSDSNINAASVAPESSD. Over residues 1263 to 1276 the composition is skewed to basic and acidic residues; sequence KGAENHEAKTKEPE. The span at 1278–1296 shows a compositional bias: polar residues; that stretch reads SETSDSNINAASVAPESSD.

Belongs to the CLU family.

The protein resides in the cytoplasm. It localises to the cytoplasmic granule. MRNA-binding protein involved in proper cytoplasmic distribution of mitochondria. Specifically binds mRNAs of nuclear-encoded mitochondrial proteins in the cytoplasm and regulates transport or translation of these transcripts close to mitochondria, playing a role in mitochondrial biogenesis. The chain is Clustered mitochondria protein homolog from Xenopus tropicalis (Western clawed frog).